The sequence spans 180 residues: Adenine phosphoribosyltransferase (180 aa).

Belongs to the purine/pyrimidine phosphoribosyltransferase family. In terms of assembly, homodimer.

It localises to the cytoplasm. It carries out the reaction AMP + diphosphate = 5-phospho-alpha-D-ribose 1-diphosphate + adenine. It participates in purine metabolism; AMP biosynthesis via salvage pathway; AMP from adenine: step 1/1. Functionally, catalyzes a salvage reaction resulting in the formation of AMP, that is energically less costly than de novo synthesis. The sequence is that of Adenine phosphoribosyltransferase from Marinobacter nauticus (strain ATCC 700491 / DSM 11845 / VT8) (Marinobacter aquaeolei).